Here is a 239-residue protein sequence, read N- to C-terminus: Octanoyltransferase (239 aa).

A BPL/LPL catalytic domain is found at 48–236; that stretch reads EGGDELVWLV…AFETVFGETT (189 aa). Substrate contacts are provided by residues 87–94, 167–169, and 180–182; these read RGGEYTYH, ALG, and GLS. Catalysis depends on cysteine 198, which acts as the Acyl-thioester intermediate.

This sequence belongs to the LipB family.

The protein resides in the cytoplasm. The enzyme catalyses octanoyl-[ACP] + L-lysyl-[protein] = N(6)-octanoyl-L-lysyl-[protein] + holo-[ACP] + H(+). Its pathway is protein modification; protein lipoylation via endogenous pathway; protein N(6)-(lipoyl)lysine from octanoyl-[acyl-carrier-protein]: step 1/2. In terms of biological role, catalyzes the transfer of endogenously produced octanoic acid from octanoyl-acyl-carrier-protein onto the lipoyl domains of lipoate-dependent enzymes. Lipoyl-ACP can also act as a substrate although octanoyl-ACP is likely to be the physiological substrate. The chain is Octanoyltransferase from Rhizobium etli (strain ATCC 51251 / DSM 11541 / JCM 21823 / NBRC 15573 / CFN 42).